Here is a 561-residue protein sequence, read N- to C-terminus: Probable galacturonosyltransferase 9 (561 aa).

Residues 1 to 27 (MAVAFRGGRGGVGSGQSTGLRSFFSYR) lie on the Cytoplasmic side of the membrane. Residues 28 to 48 (IFISALFSFLFLATFSVVLNS) traverse the membrane as a helical; Signal-anchor for type II membrane protein segment. The Lumenal segment spans residues 49-561 (SRHQPHQDHT…EFVQMCNFGL (513 aa)). N-linked (GlcNAc...) asparagine glycans are attached at residues Asn-124, Asn-320, Asn-346, and Asn-426.

The protein belongs to the glycosyltransferase 8 family. As to expression, expressed in roots, inflorescences, siliques, leaves and stems.

The protein localises to the golgi apparatus membrane. The protein operates within glycan metabolism; pectin biosynthesis. Functionally, may be involved in pectin synthesis. The sequence is that of Probable galacturonosyltransferase 9 (GAUT9) from Arabidopsis thaliana (Mouse-ear cress).